The following is a 663-amino-acid chain: Epithelial sodium channel subunit gamma-2 (663 aa).

At 1 to 55 (MSNSGKKLTQKLKKNLPVTGPQAPTLYELMQWYCLNTNTHGCRRIVVSKGRLRRW) the chain is on the cytoplasmic side. Residues 56 to 76 (IWIVLTLIAVALIFWQCALLL) form a helical membrane-spanning segment. The Extracellular portion of the chain corresponds to 77-544 (MTYYSVSASI…GGQLGLWMSC (468 aa)). Cystine bridges form between Cys101/Cys286, Cys209/Cys217, Cys263/Cys270, Cys375/Cys460, Cys397/Cys456, Cys401/Cys452, Cys410/Cys437, and Cys412/Cys426. The chain crosses the membrane as a helical span at residues 545-565 (SMVCGLEIVEVFFIDSFWVIL). Over 566 to 663 (RQKWHKLCNW…IDSDEDVERF (98 aa)) the chain is Cytoplasmic.

It belongs to the amiloride-sensitive sodium channel (TC 1.A.6) family. SCNN1G subfamily. Component of the heterotrimeric epithelial sodium channel (ENaC) composed of an alpha/SCNN1A, a beta/SCNN1B and a gamma/SCNN1G subunit.

Its subcellular location is the apical cell membrane. The enzyme catalyses Na(+)(in) = Na(+)(out). Originally identified and characterized by its inhibition by the diuretic drug amiloride. This is one of the three pore-forming subunits of the heterotrimeric epithelial sodium channel (ENaC), a critical regulator of sodium balance and fluid homeostasis. ENaC operates in epithelial tissues, where it mediates the electrodiffusion of sodium ions from extracellular fluid through the apical membrane of cells, with water following osmotically. This chain is Epithelial sodium channel subunit gamma-2 (scnn1g-b), found in Xenopus laevis (African clawed frog).